We begin with the raw amino-acid sequence, 480 residues long: METIFAQSSAFGKAGVAVFRISGPKSLEVLQLLTGRADFKPRIMYYQQITVPKTIVNSASFAYKEPRVEPITNRRATSDIVSEGGSIDYKELIDNAMVVYFKSPNSFTGEDVVEIHTHGSKAISIMLINALLNIADIRLAEAGEFTKRAFLNNKFDLTAAEGIADLINAETIMQHRQAIRQASGGLEELYNNWRTQLLKIISLLEAYIDFPDEDIPDSVLNDVNNTHKNLVNEISNYLNDNRRGELLNSGLKLAIIGPPNVGKSSLLNFLMQRDIAIVSNIAGTTRDIIEGHLDIGGYPIILQDTAGIREESSDIIEQEGIKRAIHSAKTADIKIIMFDAEKLDSSINEDIMNLINENTITIINKIDLIEPNKIFSIENKYKCLRVSVKNNIALSSILKNIENIAENMAGFTETPYITNQRHRHYLKQALSHLTAFSLDNDLVLATEDIRMTARCIGAITGVINIEEILGEIFKNFCIGK.

(6S)-5-formyl-5,6,7,8-tetrahydrofolate contacts are provided by Arg-20, Glu-114, and Lys-154. The TrmE-type G domain occupies 250–406 (GLKLAIIGPP…ILKNIENIAE (157 aa)). Asn-260 provides a ligand contact to K(+). Residues 260 to 265 (NVGKSS), 279 to 285 (SNIAGTT), and 304 to 307 (DTAG) each bind GTP. Ser-264 contributes to the Mg(2+) binding site. K(+) contacts are provided by Ser-279, Ile-281, and Thr-284. Thr-285 is a Mg(2+) binding site. Lys-480 is a binding site for (6S)-5-formyl-5,6,7,8-tetrahydrofolate.

Belongs to the TRAFAC class TrmE-Era-EngA-EngB-Septin-like GTPase superfamily. TrmE GTPase family. In terms of assembly, homodimer. Heterotetramer of two MnmE and two MnmG subunits. K(+) serves as cofactor.

It localises to the cytoplasm. Exhibits a very high intrinsic GTPase hydrolysis rate. Involved in the addition of a carboxymethylaminomethyl (cmnm) group at the wobble position (U34) of certain tRNAs, forming tRNA-cmnm(5)s(2)U34. This Rickettsia felis (strain ATCC VR-1525 / URRWXCal2) (Rickettsia azadi) protein is tRNA modification GTPase MnmE.